A 470-amino-acid chain; its full sequence is UDP-N-acetylmuramoylalanine--D-glutamate ligase (470 aa).

120 to 126 contacts ATP; it reads GSNGKTT.

This sequence belongs to the MurCDEF family.

It localises to the cytoplasm. The enzyme catalyses UDP-N-acetyl-alpha-D-muramoyl-L-alanine + D-glutamate + ATP = UDP-N-acetyl-alpha-D-muramoyl-L-alanyl-D-glutamate + ADP + phosphate + H(+). It functions in the pathway cell wall biogenesis; peptidoglycan biosynthesis. Its function is as follows. Cell wall formation. Catalyzes the addition of glutamate to the nucleotide precursor UDP-N-acetylmuramoyl-L-alanine (UMA). This chain is UDP-N-acetylmuramoylalanine--D-glutamate ligase, found in Nitrosomonas eutropha (strain DSM 101675 / C91 / Nm57).